The primary structure comprises 383 residues: tRNA-specific 2-thiouridylase MnmA (383 aa).

ATP-binding positions include 16–23 and leucine 42; that span reads AMSGGVDS. Cysteine 110 (nucleophile) is an active-site residue. Cysteine 110 and cysteine 209 are joined by a disulfide. Glycine 134 contacts ATP. The interval 159 to 161 is interaction with tRNA; that stretch reads KDQ. Cysteine 209 acts as the Cysteine persulfide intermediate in catalysis.

Belongs to the MnmA/TRMU family.

The protein localises to the cytoplasm. It carries out the reaction S-sulfanyl-L-cysteinyl-[protein] + uridine(34) in tRNA + AH2 + ATP = 2-thiouridine(34) in tRNA + L-cysteinyl-[protein] + A + AMP + diphosphate + H(+). Functionally, catalyzes the 2-thiolation of uridine at the wobble position (U34) of tRNA, leading to the formation of s(2)U34. The polypeptide is tRNA-specific 2-thiouridylase MnmA (Caulobacter vibrioides (strain ATCC 19089 / CIP 103742 / CB 15) (Caulobacter crescentus)).